We begin with the raw amino-acid sequence, 497 residues long: Acetyl-coenzyme A carboxylase carboxyl transferase subunit beta (497 aa).

Residues L217–Y489 form the CoA carboxyltransferase N-terminal domain. The Zn(2+) site is built by C221, C224, C240, and C243. A C4-type zinc finger spans residues C221–C243.

This sequence belongs to the AccD/PCCB family. In terms of assembly, acetyl-CoA carboxylase is a heterohexamer composed of biotin carboxyl carrier protein, biotin carboxylase and 2 subunits each of ACCase subunit alpha and ACCase plastid-coded subunit beta (accD). Zn(2+) is required as a cofactor.

Its subcellular location is the plastid. The catalysed reaction is N(6)-carboxybiotinyl-L-lysyl-[protein] + acetyl-CoA = N(6)-biotinyl-L-lysyl-[protein] + malonyl-CoA. It functions in the pathway lipid metabolism; malonyl-CoA biosynthesis; malonyl-CoA from acetyl-CoA: step 1/1. Its function is as follows. Component of the acetyl coenzyme A carboxylase (ACC) complex. Biotin carboxylase (BC) catalyzes the carboxylation of biotin on its carrier protein (BCCP) and then the CO(2) group is transferred by the transcarboxylase to acetyl-CoA to form malonyl-CoA. The chain is Acetyl-coenzyme A carboxylase carboxyl transferase subunit beta from Cuscuta reflexa (Southern Asian dodder).